A 1585-amino-acid chain; its full sequence is uncharacterized protein (1585 aa).

Positions 12–59 (DKISRKLRMIQGNAERLKRAANGPLIFEAEDRTERVMRQIDRSANRLT) form a coiled coil. Disordered regions lie at residues 586-627 (PKRT…SLPR) and 645-692 (IRRR…NPTR). Residues 618 to 627 (TATGPTSLPR) are compositionally biased toward polar residues. A compositionally biased stretch (basic residues) spans 645–655 (IRRRRGKRVLG). Residues 661–672 (NRMNPSDSSIAV) show a composition bias toward polar residues. A phosphoserine mark is found at Ser970 and Ser972.

This sequence to B.subtilis XkdO.

This is an uncharacterized protein from Bacillus subtilis (strain 168).